We begin with the raw amino-acid sequence, 207 residues long: Shikimate kinase (207 aa).

Position 32-37 (32-37 (GVGKST)) interacts with ATP. S36 lines the Mg(2+) pocket. The substrate site is built by D54, R78, and G100. Residue R138 participates in ATP binding. R157 contacts substrate.

It belongs to the shikimate kinase family. Monomer. The cofactor is Mg(2+).

Its subcellular location is the cytoplasm. The catalysed reaction is shikimate + ATP = 3-phosphoshikimate + ADP + H(+). The protein operates within metabolic intermediate biosynthesis; chorismate biosynthesis; chorismate from D-erythrose 4-phosphate and phosphoenolpyruvate: step 5/7. Catalyzes the specific phosphorylation of the 3-hydroxyl group of shikimic acid using ATP as a cosubstrate. The sequence is that of Shikimate kinase from Bradyrhizobium diazoefficiens (strain JCM 10833 / BCRC 13528 / IAM 13628 / NBRC 14792 / USDA 110).